Here is a 237-residue protein sequence, read N- to C-terminus: Class B acid phosphatase (237 aa).

Residues 1–23 (MKKITLALSAVCLLFTLNHSANA) form the signal peptide. The active-site Nucleophile is the Asp69. 2 residues coordinate Mg(2+): Asp69 and Asp71. Asp71 (proton donor) is an active-site residue. Residues 137-138 (TG) and Lys177 contribute to the substrate site. Asp192 is a Mg(2+) binding site.

Belongs to the class B bacterial acid phosphatase family. In terms of assembly, homotetramer. Requires Mg(2+) as cofactor.

The protein resides in the periplasm. The enzyme catalyses a phosphate monoester + H2O = an alcohol + phosphate. Its function is as follows. Dephosphorylates several organic phosphate monoesters including monophosphate nucleotides (NMPs), coenzyme A (CoA), nicotinamide adenine dinucleotide phosphate (NADP), flavin mononucleotide (FMN) and phosphorylated 5-6 carbon sugars in vitro. Also has a phosphotransferase activity catalyzing the transfer of low-energy phosphate groups from organic phosphate monoesters to free hydroxyl groups of various organic compounds. The protein is Class B acid phosphatase (aphA) of Salmonella typhi.